A 418-amino-acid chain; its full sequence is Lactosylceramide alpha-2,3-sialyltransferase (418 aa).

The segment at 1–25 (MRTKAAGCAERRPLQPRTEAAAAPA) is disordered. Residues 1 to 61 (MRTKAAGCAE…RAQSKMRRPS (61 aa)) lie on the Cytoplasmic side of the membrane. The chain crosses the membrane as a helical; Signal-anchor for type II membrane protein span at residues 62-82 (LLLKDILKCTLLVFGVWILYI). The Lumenal segment spans residues 83–418 (LKLNYTTEEC…DLSGGIDREF (336 aa)). 3 N-linked (GlcNAc...) asparagine glycosylation sites follow: asparagine 86, asparagine 236, and asparagine 390. A disulfide bridge links cysteine 195 with cysteine 353.

The protein belongs to the glycosyltransferase 29 family. In terms of processing, N-glycosylated. In terms of tissue distribution, ubiquitous. High expression in brain, skeletal muscle, placenta, and testis. mRNA widely distributed in human brain, but slightly elevated expression was observed in the cerebral cortex, temporal lobe, and putamen.

The protein localises to the golgi apparatus membrane. It carries out the reaction a beta-D-Gal-(1-&gt;4)-beta-D-Glc-(1&lt;-&gt;1)-Cer(d18:1(4E)) + CMP-N-acetyl-beta-neuraminate = a ganglioside GM3 (d18:1(4E)) + CMP + H(+). It catalyses the reaction ganglioside GA2 (d18:1(4E)/18:0) + CMP-N-acetyl-beta-neuraminate = ganglioside GM2 (d18:1(4E)/18:0) + CMP + H(+). The catalysed reaction is a beta-D-Gal-(1&lt;-&gt;1')-ceramide + CMP-N-acetyl-beta-neuraminate = N-acetyl-alpha-neuraminosyl-(2-&gt;3)-beta-D-galactosyl-(1&lt;-&gt;1')-ceramide + CMP + H(+). The enzyme catalyses a beta-D-galactosyl-(1&lt;-&gt;1')-N-acylsphing-4-enine + CMP-N-acetyl-beta-neuraminate = a ganglioside GM4 (d18:1(4E)) + CMP + H(+). It carries out the reaction ganglioside GA1 (d18:1(4E)/18:0) + CMP-N-acetyl-beta-neuraminate = ganglioside GM1 (d18:1(4E)/18:0) + CMP + H(+). It participates in glycolipid biosynthesis. Functionally, transfers the sialyl group (N-acetyl-alpha-neuraminyl or NeuAc) from CMP-NeuAc to the non-reducing terminal galactose (Gal) of glycosphingolipids forming gangliosides (important molecules involved in the regulation of multiple cellular processes, including cell proliferation and differentiation, apoptosis, embryogenesis, development, and oncogenesis). Mainly involved in the biosynthesis of ganglioside GM3 but can also use different glycolipids as substrate acceptors such as D-galactosylceramide (GalCer), asialo-GM2 (GA2) and asialo-GM1 (GA1), although less preferentially than beta-D-Gal-(1-&gt;4)-beta-D-Glc-(1&lt;-&gt;1)-Cer (LacCer). This is Lactosylceramide alpha-2,3-sialyltransferase (ST3GAL5) from Homo sapiens (Human).